Reading from the N-terminus, the 418-residue chain is cAMP-dependent protein kinase type II-beta regulatory subunit (418 aa).

The interval 2 to 153 is dimerization and phosphorylation; that stretch reads SIEIPAGLTE…RLQEACKDIL (152 aa). Residues 48–57 show a composition bias toward basic and acidic residues; it reads TARFGHEGRT. Residues 48–96 form a disordered region; it reads TARFGHEGRTWGDLGAAAGGGTPSKGVNFAEEPMQSDSEDGEEEEAAPA. Phosphothreonine is present on Thr69. A phosphoserine mark is found at Ser83, Ser85, and Ser114. Positions 84 to 94 are enriched in acidic residues; the sequence is DSEDGEEEEAA. 3',5'-cyclic AMP contacts are provided by residues 154–275, Glu223, Arg232, 276–418, Glu352, and Arg361; these read LFKN…ESLP and FLKS…EPTA.

This sequence belongs to the cAMP-dependent kinase regulatory chain family. As to quaternary structure, the inactive form of the enzyme is composed of two regulatory chains and two catalytic chains. Activation by cAMP produces two active catalytic monomers and a regulatory dimer that binds four cAMP molecules. Interacts with PRKACA and PRKACB. Interacts with the phosphorylated form of PJA2. Forms a complex composed of PRKAR2B, GSK3B and GSKIP through GSKIP interaction; facilitates PKA-induced phosphorylation and regulates GSK3B activity. Post-translationally, phosphorylated by the activated catalytic chain. As to expression, four types of regulatory chains are found: I-alpha, I-beta, II-alpha, and II-beta. Their expression varies among tissues and is in some cases constitutive and in others inducible.

It is found in the cytoplasm. The protein localises to the cell membrane. Functionally, regulatory subunit of the cAMP-dependent protein kinases involved in cAMP signaling in cells. Type II regulatory chains mediate membrane association by binding to anchoring proteins, including the MAP2 kinase. This Homo sapiens (Human) protein is cAMP-dependent protein kinase type II-beta regulatory subunit (PRKAR2B).